Consider the following 233-residue polypeptide: NAD(P)H-hydrate epimerase (233 aa).

One can recognise a YjeF N-terminal domain in the interval 10–217; it reads AINVDLELFN…ALQRKYELNL (208 aa). 60 to 64 is a (6S)-NADPHX binding site; that stretch reads NNGGD. Residues N61 and D125 each coordinate K(+). Residues 129-135 and D158 each bind (6S)-NADPHX; that span reads GFSFKPP. S161 serves as a coordination point for K(+).

The protein belongs to the NnrE/AIBP family. K(+) serves as cofactor.

The enzyme catalyses (6R)-NADHX = (6S)-NADHX. It catalyses the reaction (6R)-NADPHX = (6S)-NADPHX. Its function is as follows. Catalyzes the epimerization of the S- and R-forms of NAD(P)HX, a damaged form of NAD(P)H that is a result of enzymatic or heat-dependent hydration. This is a prerequisite for the S-specific NAD(P)H-hydrate dehydratase to allow the repair of both epimers of NAD(P)HX. The polypeptide is NAD(P)H-hydrate epimerase (Drosophila grimshawi (Hawaiian fruit fly)).